We begin with the raw amino-acid sequence, 198 residues long: Protein GrpE (198 aa).

Residues Met1–Glu27 are compositionally biased toward basic and acidic residues. Positions Met1–Val39 are disordered. The span at Ser29–Val39 shows a compositional bias: acidic residues.

It belongs to the GrpE family. Homodimer.

It is found in the cytoplasm. In terms of biological role, participates actively in the response to hyperosmotic and heat shock by preventing the aggregation of stress-denatured proteins, in association with DnaK and GrpE. It is the nucleotide exchange factor for DnaK and may function as a thermosensor. Unfolded proteins bind initially to DnaJ; upon interaction with the DnaJ-bound protein, DnaK hydrolyzes its bound ATP, resulting in the formation of a stable complex. GrpE releases ADP from DnaK; ATP binding to DnaK triggers the release of the substrate protein, thus completing the reaction cycle. Several rounds of ATP-dependent interactions between DnaJ, DnaK and GrpE are required for fully efficient folding. The sequence is that of Protein GrpE from Bacillus cytotoxicus (strain DSM 22905 / CIP 110041 / 391-98 / NVH 391-98).